Reading from the N-terminus, the 408-residue chain is MDNLAIFEEFNSKKISQDDLEATIISLNNYFVKLNDLNNQYLNLIRQDNIDKSKKQNIKIQRKNTKIEINKIIATTKLFKQNIKLAESMYKKIKSSNNQDDIKKAQLEVDNAKSMLIQFKEAINGQGKSIKLKKLNDVAIEIKNLSFKYGPEFPNAIDDVSFTINQGEYVTIIGHNGSGKSTISKILIGVLNAQQGEIRIFGNIVHDHNIEQARKFLGIVFQNPDNQFIGSTVEADIAFGLENKRVDPKKMPDIILDSAKKVGMEWALKKEPLNLSGGQKQRVAIASTLALDPDIMIFDEATSMLDPKGKREIKEIMVQLRETRTKTILSITHDMDEILNADKVIVLDHGKLVRVAKPLDIVEDKEFLRNIQLDVPFVGLVREELEKKGIKIASTQNIDELVEQICKK.

One can recognise an ABC transporter domain in the interval 140–374 (IEIKNLSFKY…KEFLRNIQLD (235 aa)). 174 to 181 (GHNGSGKS) serves as a coordination point for ATP.

This sequence belongs to the ABC transporter superfamily. Energy-coupling factor EcfA family. In terms of assembly, forms a stable energy-coupling factor (ECF) transporter complex composed of 2 membrane-embedded substrate-binding proteins (S component), 2 ATP-binding proteins (A component) and 2 transmembrane proteins (T component).

It is found in the cell membrane. Functionally, ATP-binding (A) component of a common energy-coupling factor (ECF) ABC-transporter complex. Unlike classic ABC transporters this ECF transporter provides the energy necessary to transport a number of different substrates. The polypeptide is Energy-coupling factor transporter ATP-binding protein EcfA1 (Mycoplasma capricolum subsp. capricolum (strain California kid / ATCC 27343 / NCTC 10154)).